Reading from the N-terminus, the 463-residue chain is Sodium-coupled neutral amino acid transporter 7 (463 aa).

A Phosphoserine modification is found at Ser28. The next 11 membrane-spanning stretches (helical) occupy residues 56-76 (AIFI…PAAF), 82-102 (VAAG…GLVI), 130-150 (LCEV…LIII), 179-199 (FTIS…REIG), 206-226 (FLSV…YIWP), 240-260 (ASWI…QCHV), 283-303 (AAMV…FLTF), 320-340 (MAVA…YPIL), 372-392 (VLQT…IPDI), 396-416 (ISVI…LCLI), and 429-449 (ASWW…AFIF).

Belongs to the amino acid/polyamine transporter 2 family. In terms of assembly, interacts with the mTORC1 complex; this interaction mediates the recruitment of mTORC1 to the lysosome and its subsequent activation.

Its subcellular location is the lysosome membrane. The protein localises to the cell projection. It localises to the axon. It carries out the reaction L-asparagine(in) + Na(+)(in) = L-asparagine(out) + Na(+)(out). It catalyses the reaction L-glutamine(in) + Na(+)(in) = L-glutamine(out) + Na(+)(out). Functionally, symporter that selectively cotransports sodium ions and amino acids, such as L-glutamine and L-asparagine from the lysosome into the cytoplasm and may participates in mTORC1 activation. The transport activity requires an acidic lysosomal lumen. In Bos taurus (Bovine), this protein is Sodium-coupled neutral amino acid transporter 7.